The following is a 324-amino-acid chain: Beta-ketoacyl-[acyl-carrier-protein] synthase III (324 aa).

Residues Cys-112 and His-251 contribute to the active site. Residues 252–256 (QANLR) are ACP-binding. Residue Asn-281 is part of the active site.

It belongs to the thiolase-like superfamily. FabH family. Homodimer.

It localises to the cytoplasm. The catalysed reaction is malonyl-[ACP] + acetyl-CoA + H(+) = 3-oxobutanoyl-[ACP] + CO2 + CoA. The protein operates within lipid metabolism; fatty acid biosynthesis. Functionally, catalyzes the condensation reaction of fatty acid synthesis by the addition to an acyl acceptor of two carbons from malonyl-ACP. Catalyzes the first condensation reaction which initiates fatty acid synthesis and may therefore play a role in governing the total rate of fatty acid production. Possesses both acetoacetyl-ACP synthase and acetyl transacylase activities. Its substrate specificity determines the biosynthesis of branched-chain and/or straight-chain of fatty acids. In Clostridium perfringens (strain 13 / Type A), this protein is Beta-ketoacyl-[acyl-carrier-protein] synthase III.